A 195-amino-acid chain; its full sequence is Adenylate kinase (195 aa).

10 to 15 (GAGKGT) contributes to the ATP binding site. The interval 30 to 59 (STGDMLRAAVAAGTPVGLKAKAVMDAGGLV) is NMP. AMP-binding positions include T31, R36, 57-59 (GLV), 85-88 (GFPR), and Q92. The interval 126-143 (NRAAEAQAKGEAVRKDDD) is LID. Residue R127 coordinates ATP. R150 contacts AMP. A178 lines the ATP pocket.

The protein belongs to the adenylate kinase family. As to quaternary structure, monomer.

It localises to the cytoplasm. It carries out the reaction AMP + ATP = 2 ADP. Its pathway is purine metabolism; AMP biosynthesis via salvage pathway; AMP from ADP: step 1/1. In terms of biological role, catalyzes the reversible transfer of the terminal phosphate group between ATP and AMP. Plays an important role in cellular energy homeostasis and in adenine nucleotide metabolism. The protein is Adenylate kinase of Xanthobacter autotrophicus (strain ATCC BAA-1158 / Py2).